We begin with the raw amino-acid sequence, 277 residues long: Large ribosomal subunit protein uL2 (277 aa).

Disordered stretches follow at residues 37–59 (KNSTGGRNHNGHITTRHRGGGHK) and 221–265 (RGTA…KRTD). Over residues 50-59 (TTRHRGGGHK) the composition is skewed to basic residues. Positions 229 to 241 (DHPHGGGEGRTGE) are enriched in basic and acidic residues.

The protein belongs to the universal ribosomal protein uL2 family. In terms of assembly, part of the 50S ribosomal subunit. Forms a bridge to the 30S subunit in the 70S ribosome.

Its function is as follows. One of the primary rRNA binding proteins. Required for association of the 30S and 50S subunits to form the 70S ribosome, for tRNA binding and peptide bond formation. It has been suggested to have peptidyltransferase activity; this is somewhat controversial. Makes several contacts with the 16S rRNA in the 70S ribosome. The sequence is that of Large ribosomal subunit protein uL2 from Chromobacterium violaceum (strain ATCC 12472 / DSM 30191 / JCM 1249 / CCUG 213 / NBRC 12614 / NCIMB 9131 / NCTC 9757 / MK).